Consider the following 196-residue polypeptide: Glycerol-3-phosphate acyltransferase (196 aa).

Transmembrane regions (helical) follow at residues 3 to 23, 78 to 98, 112 to 132, and 154 to 174; these read NAVF…ILVS, VGVV…PVFY, VLLA…IVVF, and WLLL…LLLI.

The protein belongs to the PlsY family. Probably interacts with PlsX.

The protein resides in the cell inner membrane. It carries out the reaction an acyl phosphate + sn-glycerol 3-phosphate = a 1-acyl-sn-glycero-3-phosphate + phosphate. The protein operates within lipid metabolism; phospholipid metabolism. In terms of biological role, catalyzes the transfer of an acyl group from acyl-phosphate (acyl-PO(4)) to glycerol-3-phosphate (G3P) to form lysophosphatidic acid (LPA). This enzyme utilizes acyl-phosphate as fatty acyl donor, but not acyl-CoA or acyl-ACP. This is Glycerol-3-phosphate acyltransferase from Methylobacillus flagellatus (strain ATCC 51484 / DSM 6875 / VKM B-1610 / KT).